Consider the following 954-residue polypeptide: Bifunctional glutamine synthetase adenylyltransferase/adenylyl-removing enzyme (954 aa).

An adenylyl removase region spans residues 1 to 452 (MAVQKDSNKS…HFKATVGGEE (452 aa)). The tract at residues 458–954 (EHWTAQLWNV…ILAIYQAILE (497 aa)) is adenylyl transferase.

It belongs to the GlnE family. Mg(2+) serves as cofactor.

It catalyses the reaction [glutamine synthetase]-O(4)-(5'-adenylyl)-L-tyrosine + phosphate = [glutamine synthetase]-L-tyrosine + ADP. It carries out the reaction [glutamine synthetase]-L-tyrosine + ATP = [glutamine synthetase]-O(4)-(5'-adenylyl)-L-tyrosine + diphosphate. In terms of biological role, involved in the regulation of glutamine synthetase GlnA, a key enzyme in the process to assimilate ammonia. When cellular nitrogen levels are high, the C-terminal adenylyl transferase (AT) inactivates GlnA by covalent transfer of an adenylyl group from ATP to specific tyrosine residue of GlnA, thus reducing its activity. Conversely, when nitrogen levels are low, the N-terminal adenylyl removase (AR) activates GlnA by removing the adenylyl group by phosphorolysis, increasing its activity. The regulatory region of GlnE binds the signal transduction protein PII (GlnB) which indicates the nitrogen status of the cell. In Shewanella oneidensis (strain ATCC 700550 / JCM 31522 / CIP 106686 / LMG 19005 / NCIMB 14063 / MR-1), this protein is Bifunctional glutamine synthetase adenylyltransferase/adenylyl-removing enzyme.